We begin with the raw amino-acid sequence, 345 residues long: Ananain (345 aa).

The signal sequence occupies residues 1 to 24 (MTSKVQLVFLFLFLCVMWASPSAA). A propeptide spans 25–122 (SCDEPSDPMM…VSFDDVDISS (98 aa)) (activation peptide). Disulfide bonds link Cys144-Cys184, Cys178-Cys217, and Cys273-Cys325. Cys147 is a catalytic residue. Cys147 lines the E64 pocket. Active-site residues include His279 and Asn300.

In terms of tissue distribution, stem (at protein level).

It carries out the reaction Hydrolysis of proteins with broad specificity for peptide bonds. Best reported small molecule substrate Bz-Phe-Val-Arg-|-NHMec, but broader specificity than fruit bromelain.. Its activity is regulated as follows. Strongly inhibited by chicken egg-white cystatin. Inhibited by iodoacetamide and the active-site-directed inhibitor E64 (L-trans-epoxysuccinyl-leucylamide-(4-guanido)-butane). In terms of biological role, cysteine protease. Displays a high level of diversity in substrate specificity at the P1-P1' cleavage site. A hydrophilic P1 residue is preferred, with Gln or Arg strongly preferred. Favors an Ile/Leu residue at the P2 position of substrates, with an overall higher preference for Leu. The optimal tripeptide for cleavage is Pro-Leu-Gln, with cleavage occurring after the Gln residue. Another optimal tripeptide is Val-Leu-Arg, which may imply that a hydrophobic residue at the P3 position of substrates is preferred. This Ananas comosus (Pineapple) protein is Ananain.